Reading from the N-terminus, the 493-residue chain is Transmembrane protein 184 homolog DDB_G0284525 (493 aa).

Residues 1–10 (MTQESSSSNH) show a composition bias toward polar residues. Residues 1-25 (MTQESSSSNHYVDESSFDNNNNNNN) form a disordered region. The next 7 helical transmembrane spans lie at 46 to 66 (VPAL…ATIL), 87 to 107 (IVRI…SLLL), 119 to 139 (DCYE…YGGG), 180 to 200 (YVLV…FGLY), 212 to 232 (FYNA…VVLF), 254 to 274 (IVVF…NFGW), and 293 to 313 (FLIC…FPYE). 2 N-linked (GlcNAc...) asparagine glycosylation sites follow: Asn415 and Asn416.

This sequence belongs to the TMEM184 family.

The protein resides in the cell membrane. Probable transporter. The protein is Transmembrane protein 184 homolog DDB_G0284525 (tmem184A) of Dictyostelium discoideum (Social amoeba).